A 1077-amino-acid polypeptide reads, in one-letter code: Eukaryotic translation initiation factor 2-alpha kinase pek-1 (1077 aa).

Positions 1–23 (MSVYYIVLAGFLLFMALVPFNAG) are cleaved as a signal peptide. Residues 24-453 (QQYIDDDIEV…ITLMQTIFSY (430 aa)) lie on the Lumenal side of the membrane. Residue Asn206 is glycosylated (N-linked (GlcNAc...) asparagine). Residues 454–474 (IFNPTAVVSFLAGLIGVTVAV) form a helical membrane-spanning segment. The Cytoplasmic portion of the chain corresponds to 475 to 1077 (VYNKIAKSSP…HEVATHKFLQ (603 aa)). The 473-residue stretch at 604-1076 (FEVKKVIGHG…AHEVATHKFL (473 aa)) folds into the Protein kinase domain. Residues 610-618 (IGHGGFGVV) and Lys633 each bind ATP. Positions 727–834 (MPPVVGNTTD…FVDGSDDVDN (108 aa)) are disordered. Positions 732–746 (GNTTDAENSWSTSAK) are enriched in polar residues. Basic and acidic residues predominate over residues 766–778 (GSDRTTAELKEES). Over residues 783-796 (ESDEESDTTEDSSS) the composition is skewed to acidic residues. Residues 797–808 (SDESPSSSSGSS) are compositionally biased toward low complexity. Asp933 (proton acceptor) is an active-site residue.

It belongs to the protein kinase superfamily. Ser/Thr protein kinase family. GCN2 subfamily. In terms of assembly, forms dimers with HSPA5/BIP in resting cells. Oligomerizes in ER-stressed cells. In terms of processing, autophosphorylated. Post-translationally, N-glycosylated. In terms of tissue distribution, expressed in intestinal cells.

Its subcellular location is the endoplasmic reticulum membrane. The enzyme catalyses L-seryl-[protein] + ATP = O-phospho-L-seryl-[protein] + ADP + H(+). It catalyses the reaction L-threonyl-[protein] + ATP = O-phospho-L-threonyl-[protein] + ADP + H(+). Perturbation in protein folding in the endoplasmic reticulum (ER) promotes reversible dissociation from HSPA5/BIP and oligomerization, resulting in transautophosphorylation and kinase activity induction. Its function is as follows. Phosphorylates the alpha subunit of eukaryotic translation-initiation factor 2 (eIF2alpha), leading to its inactivation and thus to a rapid reduction of translational initiation and repression of global protein synthesis. May phosphorylate eIF2alpha during hypoxia. Proposed to have a role in alleviating endoplasmic reticulum stress. In Caenorhabditis elegans, this protein is Eukaryotic translation initiation factor 2-alpha kinase pek-1 (pek-1).